A 252-amino-acid polypeptide reads, in one-letter code: Transmembrane ascorbate-dependent reductase CYB561 (252 aa).

At Met-1 the chain carries N-acetylmethionine. Residues 1-17 (MESPAGRTPAPGALPYY) are Cytoplasmic-facing. Residues 18–38 (VAFSQLLGLTVVAVTGAWLGA) form a helical membrane-spanning segment. The Cytochrome b561 domain occupies 20 to 221 (FSQLLGLTVV…FGAVVLYILT (202 aa)). Residues 39–52 (YRGGIAWESALQFN) are Vesicular-facing. Residues 53 to 73 (VHPLCMIIGLVFLQGDALLVY) traverse the membrane as a helical segment. Positions 54, 74, and 81 each coordinate heme b. At 74–85 (RVFRNEAKRTTK) the chain is on the cytoplasmic side. L-ascorbate contacts are provided by Lys-81 and Lys-85. The helical transmembrane segment at 86 to 106 (ILHGLLHVLAFVIALVGLVAV) threads the bilayer. Heme b-binding positions include His-88, 117–120 (DLYS), and His-122. Topologically, residues 107-125 (FDYHRKKGIADLYSLHSWC) are vesicular. Residues 126–146 (GILVFVLFLAQWLVGLGFFLF) form a helical membrane-spanning segment. The Cytoplasmic segment spans residues 147–159 (PGASFSLRSRYRP). An L-ascorbate-binding site is contributed by Arg-154. A helical transmembrane segment spans residues 160-180 (QHVFFGAAIFLLSVGTALLGL). 2 residues coordinate heme b: His-161 and Glu-182. Residues 181–199 (KEALLFQLGTKYSAFESEG) lie on the Vesicular side of the membrane. A helical membrane pass occupies residues 200–220 (VLANVLGLLLVAFGAVVLYIL). Over 221–252 (TRADWKRPLQAEEQALSMDFKTLTEGDSPSSQ) the chain is Cytoplasmic. Lys-226 lines the heme b pocket. Phosphoserine is present on residues Ser-248 and Ser-250.

Heme b serves as cofactor.

It is found in the cytoplasmic vesicle. The protein localises to the secretory vesicle. The protein resides in the chromaffin granule membrane. The catalysed reaction is monodehydro-L-ascorbate radical(out) + L-ascorbate(in) = monodehydro-L-ascorbate radical(in) + L-ascorbate(out). Transmembrane reductase that uses ascorbate as an electron donor in the cytoplasm and transfers electrons across membranes to reduce monodehydro-L-ascorbate radical in the lumen of secretory vesicles. It is therefore involved the regeneration and homeostasis within secretory vesicles of ascorbate which in turn provides reducing equivalents needed to support the activity of intravesicular enzymes. This Sus scrofa (Pig) protein is Transmembrane ascorbate-dependent reductase CYB561 (CYB561).